We begin with the raw amino-acid sequence, 417 residues long: Phosphoglycerate kinase (417 aa).

Residues 24–26 (DLN), Arg-44, 67–70 (HLGR), Arg-126, and Arg-170 contribute to the substrate site. ATP-binding positions include Lys-220, Gly-316, Glu-347, and 373–376 (GGDS).

Belongs to the phosphoglycerate kinase family. In terms of assembly, monomer.

It localises to the cytoplasm. It carries out the reaction (2R)-3-phosphoglycerate + ATP = (2R)-3-phospho-glyceroyl phosphate + ADP. It participates in carbohydrate degradation; glycolysis; pyruvate from D-glyceraldehyde 3-phosphate: step 2/5. The polypeptide is Phosphoglycerate kinase (Renibacterium salmoninarum (strain ATCC 33209 / DSM 20767 / JCM 11484 / NBRC 15589 / NCIMB 2235)).